Consider the following 332-residue polypeptide: Probable cytosolic iron-sulfur protein assembly protein 1 (332 aa).

7 WD repeats span residues 9–48 (GHTDRAWAASVHPNLPLLATCSGDKTVRIYNTNNWELVTT), 52–93 (GHNR…WQFL), 98–137 (GHENEVKGVSWSCDGQLLATCSRDKSIWVWEADDMNDEFE), 144–183 (DHTQDVKHVAWHPSEMVFASASYDDTVRLWREDDDDWICV), 188–230 (GHES…GGTG), 257–295 (AHTRAIYSVAWNKNGRIASTGADGKLVVYKENGPGQWVV), and 302–332 (AHGVYEVNDVVWLDDKLVTSGDDGVVNIWEV).

The protein belongs to the WD repeat CIA1 family. As to quaternary structure, interacts with NAR1.

Its subcellular location is the cytoplasm. The protein localises to the nucleus. Essential component of the cytosolic iron-sulfur (Fe/S) protein assembly machinery. Required for the maturation of extramitochondrial Fe/S proteins. In Yarrowia lipolytica (strain CLIB 122 / E 150) (Yeast), this protein is Probable cytosolic iron-sulfur protein assembly protein 1.